A 443-amino-acid chain; its full sequence is Cysteine proteinase B (443 aa).

The N-terminal stretch at 1-27 is a signal peptide; that stretch reads MATSRAALCAVAVVCVVLAAACAPARA. Residues 28–125 constitute a propeptide, activation peptide; it reads IHVGTPAAAL…YRKARADLSA (98 aa). 2 cysteine pairs are disulfide-bonded: Cys-147-Cys-188 and Cys-181-Cys-226. Cys-150 is an active-site residue. Asn-228 carries an N-linked (GlcNAc...) asparagine glycan. Cys-281 and Cys-329 are oxidised to a cystine. Active-site residues include His-288 and Asn-308.

It belongs to the peptidase C1 family.

The chain is Cysteine proteinase B (LMCPB) from Leishmania mexicana.